Here is a 154-residue protein sequence, read N- to C-terminus: Large ribosomal subunit protein uL13 (154 aa).

Belongs to the universal ribosomal protein uL13 family. In terms of assembly, part of the 50S ribosomal subunit.

In terms of biological role, this protein is one of the early assembly proteins of the 50S ribosomal subunit, although it is not seen to bind rRNA by itself. It is important during the early stages of 50S assembly. The polypeptide is Large ribosomal subunit protein uL13 (Brucella suis (strain ATCC 23445 / NCTC 10510)).